The following is a 554-amino-acid chain: Muellerian-inhibiting factor (554 aa).

Positions 1–24 (MQGPHLSPLVLLLATMGAVLQPEA) are cleaved as a signal peptide. A propeptide spanning residues 25-446 (VENLATNTRG…GREGRGRTGR (422 aa)) is cleaved from the precursor. 3 N-linked (GlcNAc...) asparagine glycosylation sites follow: N62, N326, and N410. 3 disulfide bridges follow: C456–C520, C482–C551, and C486–C553.

This sequence belongs to the TGF-beta family. Homodimer; disulfide-linked. Preproprotein is proteolytically processed to generate N- and C-terminal cleavage products that homodimerize and associate to form a biologically active non-covalent complex. Binding of the non-covalent complex to AMHRII induces dissociation of the pro-region from the mature C-terminal dimer. The N-terminal portion of the protein, despite having no intrinsic activity, has the role of amplifying the activity of the C-terminus. Expressed in Sertoli cells of fetal testes, and in testes just after birth, but absent in adult testes. In female, AMH is expressed after birth in the granulosa cells of the follicle.

It localises to the secreted. Functionally, plays an important role in several reproductive functions, including Muellerian duct regression during male fetal sexua,l differentiation and in the adult plays a role in Leydig cell differentiation and function. In female acts as a negative regulator of the primordial to primary follicle transition and decreases FSH sensitivity of growing follicles. Binds to its sole type II receptor, AMHR2 that recruits type I receptors ACVR1 and BMPR1A which subsequently activates the Smad pathway. The sequence is that of Muellerian-inhibiting factor (Amh) from Mus musculus (Mouse).